The sequence spans 206 residues: Uridine kinase (206 aa).

9 to 16 (GGSGSGKT) serves as a coordination point for ATP.

The protein belongs to the uridine kinase family. In terms of assembly, monomer.

The protein resides in the cytoplasm. It carries out the reaction uridine + ATP = UMP + ADP + H(+). It catalyses the reaction cytidine + ATP = CMP + ADP + H(+). The protein operates within pyrimidine metabolism; CTP biosynthesis via salvage pathway; CTP from cytidine: step 1/3. It functions in the pathway pyrimidine metabolism; UMP biosynthesis via salvage pathway; UMP from uridine: step 1/1. This Borreliella burgdorferi (strain ATCC 35210 / DSM 4680 / CIP 102532 / B31) (Borrelia burgdorferi) protein is Uridine kinase (udk).